We begin with the raw amino-acid sequence, 135 residues long: MNISDVAKITGLTSKAIRFYEEKGLVTPPMRSENGYRTYTQQHLNELTLLRQARQVGFNLEESGELVNLFNDPQRHSADVKRRTLEKVAEIERHIEELQSMRNQLLALANACPGDDSADCPIIENLSGCCHHRAG.

Residues 1-69 form the HTH merR-type domain; sequence MNISDVAKIT…LEESGELVNL (69 aa). Positions 4–23 form a DNA-binding region, H-T-H motif; sequence SDVAKITGLTSKAIRFYEEK. Cu(+) contacts are provided by C112 and C120.

In terms of assembly, homodimer.

The protein resides in the cytoplasm. Regulates the transcription of the copA and cueO genes. It detects cytoplasmic copper stress and activates transcription in response to increasing copper concentrations. This is HTH-type transcriptional regulator CueR (cueR) from Escherichia coli O157:H7.